Reading from the N-terminus, the 221-residue chain is Interleukin-12 subunit alpha (221 aa).

The first 25 residues, 1–25 (MCPLRSLLLISTLVLLHHLPHLSLG), serve as a signal peptide directing secretion. 3 disulfide bridges follow: C39-C112, C66-C198, and C87-C125. N95 carries N-linked (GlcNAc...) asparagine glycosylation.

Belongs to the IL-6 superfamily. As to quaternary structure, heterodimer with IL12B; disulfide-linked. This heterodimer is known as interleukin IL-12. Heterodimer with EBI3/IL27B; not disulfide-linked. This heterodimer is known as interleukin IL-35. Interacts with NBR1; this interaction promotes IL-12 secretion.

It is found in the secreted. In terms of biological role, heterodimerizes with IL12B to form the IL-12 cytokine or with EBI3/IL27B to form the IL-35 cytokine. IL-12 is primarily produced by professional antigen-presenting cells (APCs) such as B-cells and dendritic cells (DCs) as well as macrophages and granulocytes and regulates T-cell and natural killer-cell responses, induces the production of interferon-gamma (IFN-gamma), favors the differentiation of T-helper 1 (Th1) cells and is an important link between innate resistance and adaptive immunity. Mechanistically, exerts its biological effects through a receptor composed of IL12R1 and IL12R2 subunits. Binding to the receptor results in the rapid tyrosine phosphorylation of a number of cellular substrates including the JAK family kinases TYK2 and JAK2. In turn, recruited STAT4 gets phosphorylated and translocates to the nucleus where it regulates cytokine/growth factor responsive genes. As part of IL-35, plays essential roles in maintaining the immune homeostasis of the liver microenvironment and also functions as an immune-suppressive cytokine. Mediates biological events through unconventional receptors composed of IL12RB2 and gp130/IL6ST heterodimers or homodimers. Signaling requires the transcription factors STAT1 and STAT4, which form a unique heterodimer that binds to distinct DNA sites. The polypeptide is Interleukin-12 subunit alpha (IL12A) (Ovis aries (Sheep)).